We begin with the raw amino-acid sequence, 355 residues long: Guanine nucleotide-binding protein G(i) subunit alpha-2 (355 aa).

Gly2 is lipidated: N-myristoyl glycine. Cys3 is lipidated: S-palmitoyl cysteine. In terms of domain architecture, G-alpha spans 32-355; sequence REVKLLLLGA…KNNLKDCGLF (324 aa). Residues 35 to 48 are G1 motif; that stretch reads KLLLLGAGESGKST. Residues 40-47, 176-182, 201-205, 270-273, and Ala327 contribute to the GTP site; these read GAGESGKS, LRTRVKT, DVGGQ, and NKKD. Residues Ser47 and Thr182 each coordinate Mg(2+). The segment at 174-182 is G2 motif; sequence DVLRTRVKT. The segment at 197–206 is G3 motif; that stretch reads FKMFDVGGQR. Residues 266–273 form a G4 motif region; sequence ILFLNKKD. The interval 325 to 330 is G5 motif; sequence TCATDT.

It belongs to the G-alpha family. G(i/o/t/z) subfamily. In terms of assembly, g proteins are composed of 3 units; alpha, beta and gamma. The alpha chain contains the guanine nucleotide binding site.

It localises to the cytoplasm. The protein localises to the cytoskeleton. Its subcellular location is the microtubule organizing center. The protein resides in the centrosome. It is found in the cell membrane. Its function is as follows. Guanine nucleotide-binding proteins (G proteins) are involved as modulators or transducers in various transmembrane signaling systems. The G(i) proteins are involved in hormonal regulation of adenylate cyclase: they inhibit the cyclase in response to beta-adrenergic stimuli. May play a role in cell division. The protein is Guanine nucleotide-binding protein G(i) subunit alpha-2 (GNAI2) of Gallus gallus (Chicken).